The following is a 690-amino-acid chain: Elongation factor G (690 aa).

The 275-residue stretch at 8 to 282 folds into the tr-type G domain; that stretch reads EKTRNIGIMA…AVVAYMPSPL (275 aa). Residues 17-24, 81-85, and 135-138 contribute to the GTP site; these read AHIDAGKT, DTPGH, and NKMD.

Belongs to the TRAFAC class translation factor GTPase superfamily. Classic translation factor GTPase family. EF-G/EF-2 subfamily.

The protein localises to the cytoplasm. Catalyzes the GTP-dependent ribosomal translocation step during translation elongation. During this step, the ribosome changes from the pre-translocational (PRE) to the post-translocational (POST) state as the newly formed A-site-bound peptidyl-tRNA and P-site-bound deacylated tRNA move to the P and E sites, respectively. Catalyzes the coordinated movement of the two tRNA molecules, the mRNA and conformational changes in the ribosome. This Alkaliphilus oremlandii (strain OhILAs) (Clostridium oremlandii (strain OhILAs)) protein is Elongation factor G.